Here is a 354-residue protein sequence, read N- to C-terminus: MFLIQCLISAVIFYIQVTNALIFKGDHVSLQVNSSLTSILIPMQNDNYTEIKGQLVFIGEQLPTGTNYSGTLELLYADTVAFCFRSVQVIRYDGCPRIRTSAFISCRYKHSWHYGNSTDRISTEPDAGVMLKITKPGINDAGVYVLLVRLDHSRSTDGFILGVNVYTAGSHHNIHGVIYTSPSLQNGYSTRALFQQARLCDLPATPKGSGTSLFQHMLDLRAGKSLEDNPWLHEDVVTTETKSVVKEGIENHVYPTDMSTLPEKSLNDPPENLLIIIPIVASVMILTAMVIVIVISVKRRRIKKHPIYRPNTKTRRGIQNATPESDVMLEAAIAQLATIREESPPHSVVNPFVK.

The signal sequence occupies residues 1–20; sequence MFLIQCLISAVIFYIQVTNA. The Virion surface segment spans residues 21-274; the sequence is LIFKGDHVSL…SLNDPPENLL (254 aa). N-linked (GlcNAc...) asparagine; by host glycans are attached at residues asparagine 33, asparagine 47, asparagine 67, and asparagine 116. A helical transmembrane segment spans residues 275–295; the sequence is IIIPIVASVMILTAMVIVIVI. Over 296–354 the chain is Intravirion; that stretch reads SVKRRRIKKHPIYRPNTKTRRGIQNATPESDVMLEAAIAQLATIREESPPHSVVNPFVK. A Phosphoserine modification is found at serine 343.

It belongs to the alphaherpesvirinae glycoprotein I family. Interacts with gE; this interaction enhances the Fc receptor function of gE.

The protein localises to the virion membrane. Its subcellular location is the host cell membrane. It is found in the host cell junction. The protein resides in the host Golgi apparatus membrane. In epithelial cells, the heterodimer gE/gI is required for the cell-to-cell spread of the virus, by sorting nascent virions to cell junctions. Once the virus reaches the cell junctions, virus particles can spread to adjacent cells extremely rapidly through interactions with cellular receptors that accumulate at these junctions. Implicated in basolateral spread in polarized cells. In neuronal cells, gE/gI is essential for the anterograde spread of the infection throughout the host nervous system. Together with US9, the heterodimer gE/gI is involved in the sorting and transport of viral structural components toward axon tips. Functionally, the heterodimer gE/gI serves as a receptor for the Fc part of human IgG. Dissociation of gE/gI from IgG occurs at acidic pH. May thus be involved in anti-VZV antibodies bipolar bridging, followed by intracellular endocytosis and degradation, thereby interfering with host Ig-mediated immune responses. The sequence is that of Envelope glycoprotein I (gI) from Homo sapiens (Human).